The following is a 53-amino-acid chain: UPF0391 membrane protein Acid_3618 (53 aa).

2 consecutive transmembrane segments (helical) span residues 6–26 (LVFL…LAGA) and 28–48 (VGIA…AFLM).

Belongs to the UPF0391 family.

Its subcellular location is the cell membrane. The polypeptide is UPF0391 membrane protein Acid_3618 (Solibacter usitatus (strain Ellin6076)).